The sequence spans 337 residues: 3-isopropylmalate dehydrogenase (337 aa).

Residues Arg-86, Arg-96, Arg-117, and Asp-201 each coordinate substrate. Mg(2+)-binding residues include Asp-201, Asp-225, and Asp-229. Position 258-270 (258-270 (GAAFDIAGKNIGN)) interacts with NAD(+).

Belongs to the isocitrate and isopropylmalate dehydrogenases family. Homotetramer. It depends on Mg(2+) as a cofactor. Requires Mn(2+) as cofactor.

The protein resides in the cytoplasm. The enzyme catalyses (2R,3S)-3-isopropylmalate + NAD(+) = 4-methyl-2-oxopentanoate + CO2 + NADH. The protein operates within amino-acid biosynthesis; L-leucine biosynthesis; L-leucine from 3-methyl-2-oxobutanoate: step 3/4. Its function is as follows. Catalyzes the oxidation of 3-carboxy-2-hydroxy-4-methylpentanoate (3-isopropylmalate) to 3-carboxy-4-methyl-2-oxopentanoate. The product decarboxylates to 4-methyl-2 oxopentanoate. This Sulfurisphaera tokodaii (strain DSM 16993 / JCM 10545 / NBRC 100140 / 7) (Sulfolobus tokodaii) protein is 3-isopropylmalate dehydrogenase (leuB).